A 458-amino-acid polypeptide reads, in one-letter code: Divalent metal cation transporter MntH (458 aa).

A run of 11 helical transmembrane segments spans residues 38–58, 76–96, 119–139, 151–171, 180–200, 223–243, 275–295, 315–335, 370–390, 393–413, and 437–457; these read GFWK…VGYM, SLLS…AMAA, GGFL…AEII, MPLI…LLLM, AVVA…VILA, MLYL…LFLG, LTMA…LFFG, IVGA…LLAS, LMSV…EAKI, LLTF…IPLV, and FISG…LGFV.

The protein belongs to the NRAMP family.

The protein localises to the cell membrane. In terms of biological role, h(+)-stimulated, divalent metal cation uptake system. The chain is Divalent metal cation transporter MntH from Lacticaseibacillus paracasei (strain ATCC 334 / BCRC 17002 / CCUG 31169 / CIP 107868 / KCTC 3260 / NRRL B-441) (Lactobacillus paracasei).